The primary structure comprises 234 residues: Proteasome subunit alpha (234 aa).

Belongs to the peptidase T1A family. The 20S proteasome core is composed of 14 alpha and 14 beta subunits that assemble into four stacked heptameric rings, resulting in a barrel-shaped structure. The two inner rings, each composed of seven catalytic beta subunits, are sandwiched by two outer rings, each composed of seven alpha subunits. The catalytic chamber with the active sites is on the inside of the barrel. Has a gated structure, the ends of the cylinder being occluded by the N-termini of the alpha-subunits. Is capped at one or both ends by the proteasome regulatory ATPase, PAN.

The protein resides in the cytoplasm. With respect to regulation, the formation of the proteasomal ATPase PAN-20S proteasome complex, via the docking of the C-termini of PAN into the intersubunit pockets in the alpha-rings, triggers opening of the gate for substrate entry. Interconversion between the open-gate and close-gate conformations leads to a dynamic regulation of the 20S proteasome proteolysis activity. In terms of biological role, component of the proteasome core, a large protease complex with broad specificity involved in protein degradation. This chain is Proteasome subunit alpha, found in Picrophilus torridus (strain ATCC 700027 / DSM 9790 / JCM 10055 / NBRC 100828 / KAW 2/3).